The primary structure comprises 226 residues: Probable amino-acid ABC transporter permease protein YckA (226 aa).

Residues 27–215 (IGYTLLISFV…AICSIAAVFQ (189 aa)) form the ABC transmembrane type-1 domain. Transmembrane regions (helical) follow at residues 31 to 51 (LLIS…ISLA), 73 to 93 (VPIL…GIEF), 94 to 114 (SAVT…IAEI), 160 to 180 (VLLD…PELL), and 194 to 214 (MTMY…AAVF).

The protein belongs to the binding-protein-dependent transport system permease family. HisMQ subfamily.

The protein resides in the cell membrane. In terms of biological role, part of a binding-protein-dependent transport system. Probably responsible for the translocation of the substrate across the membrane. This chain is Probable amino-acid ABC transporter permease protein YckA (yckA), found in Bacillus subtilis (strain 168).